A 182-amino-acid polypeptide reads, in one-letter code: uncharacterized protein (182 aa).

The chain crosses the membrane as a helical span at residues 17-34; that stretch reads LSLVLFAVLSVLPLGGCA. TPR repeat units follow at residues 89–122 and 123–156; these read VDAA…TPDN and LRAL…NPEN.

The protein resides in the membrane. This is an uncharacterized protein from Sinorhizobium fredii (strain NBRC 101917 / NGR234).